Here is a 109-residue protein sequence, read N- to C-terminus: Hainantoxin-XVIII.2 (109 aa).

A signal peptide spans 1-18; that stretch reads MKLSIIIIVTSLVIAVVA. A propeptide spanning residues 19 to 46 is cleaved from the precursor; it reads FPSKDSKAIENDKTEQRMEIVVQETARA. Intrachain disulfides connect Cys-47–Cys-62, Cys-55–Cys-68, Cys-59–Cys-108, and Cys-61–Cys-81.

The protein belongs to the neurotoxin 25 family. F7 subfamily. Expressed by the venom gland.

It is found in the secreted. Putative ion channel inhibitor. In Cyriopagopus hainanus (Chinese bird spider), this protein is Hainantoxin-XVIII.2.